A 4363-amino-acid polypeptide reads, in one-letter code: AM-toxin synthetase AMT1 (4363 aa).

Residues 278 to 670 (AGQAKQRPHA…GSLLYVGRKD (393 aa)) are adenylation 1. The 78-residue stretch at 810-887 (APDSVIARQL…ALAAIAKVIP (78 aa)) folds into the Carrier 1 domain. Residue S847 is modified to O-(pantetheine 4'-phosphoryl)serine. Residues 926–1340 (EDVYACTPLQ…TLGQIDVLTS (415 aa)) form a condensation 1 region. An adenylation 2 region spans residues 1368–1765 (KQARTRPGAI…LGRKDTQIKI (398 aa)). The Carrier 2 domain occupies 1884–1961 (PPVTDMEKHV…DQARHVTLLT (78 aa)). At S1922 the chain carries O-(pantetheine 4'-phosphoryl)serine. Positions 1999-2410 (EDVYPCTPLQ…ASPSSSTLVS (412 aa)) are condensation 2. The segment at 2448–2853 (RKKALAAPQA…GRKDNQVKIR (406 aa)) is adenylation 3. The region spanning 2977 to 3053 (LPSTVMEETL…DLAACCTDRR (77 aa)) is the Carrier 3 domain. At S3014 the chain carries O-(pantetheine 4'-phosphoryl)serine. A condensation 3 region spans residues 3098 to 3503 (VEDVYPCTPM…ELVSSIETLN (406 aa)). The Carrier 4 domain maps to 3730–3806 (PAVTAMQLAI…SLAVRATENT (77 aa)). S3767 carries the O-(pantetheine 4'-phosphoryl)serine modification. A condensation 4 region spans residues 3850–4204 (QDVLPCTSMQ…GLDEIVEHYA (355 aa)).

The protein belongs to the NRP synthetase family.

The protein operates within mycotoxin biosynthesis. Its function is as follows. Nonribosomal peptide synthetase; part of the gene clusters that mediate the biosynthesis of AM-toxins, host-selective toxins (HSTs) causing Alternaria blotch on apple, a worldwide distributed disease. AM-toxins are cyclic depsipeptides containing the 3 residues 2-hydroxy-isovaleric acid (2-HIV), dehydroalanine, L-alanine which are common for all 3 AM-toxins I to III. The fourth precursor is L-alpha-amino-methoxyphenyl-valeric acid (L-Amv) for AM-toxin I, L-alpha-amino-phenyl-valeric acid (L-Apv) for AM-toxin II, and L-alpha-amino-hydroxyphenyl-valeric acid (L-Ahv) for AM-toxin III. AM-toxins have two target sites for affecting susceptible apple cells; they cause invagination of the plasma membrane and electrolyte loss, and chloroplast disorganization. The non-ribosomal peptide synthetase AMT1 contains 4 catalytic modules and is responsible for activation of each residue in AM-toxin. The aldo-keto reductase AMT2 catalyzes the conversion of 2-keto-isovaleric acid (2-KIV) to 2-hydroxy-isovaleric acid (2-HIV), one of the precursor residues incorporated by AMT1 during AM-toxin biosynthesis, by reduction of its ketone to an alcohol. The cytochrome P450 monooxygenase AMT3 and the thioesterase AMT4 are also important for AM-toxin production, but their exact function within the AM-toxin biosynthesis are not known yet. Up to 21 proteins (including AMT1 to AMT4) are predicted to be involved in AM-toxin biosynthesis since their expression ishighly up-regulated in AM-toxin-producing cultures. The sequence is that of AM-toxin synthetase AMT1 from Alternaria alternata (Alternaria rot fungus).